The chain runs to 420 residues: UPF0053 protein HI_0107 (420 aa).

Residues 2–190 enclose the CNNM transmembrane domain; it reads DSIPLSTLFI…GEATPNEQHP (189 aa). 4 helical membrane passes run 3–23, 65–85, 92–112, and 126–146; these read SIPLSTLFIILIICLVLSAYF, FILIFNNLVNISASAIATVIG, AGVAIATGLLTFVMLVFSEIF, and FFSSHILTSLLKIFYPLVWLM. CBS domains lie at 208 to 268 and 273 to 333; these read MVPR…KNEF and LIRA…FTTS.

The protein belongs to the UPF0053 family.

The protein resides in the cell membrane. In Haemophilus influenzae (strain ATCC 51907 / DSM 11121 / KW20 / Rd), this protein is UPF0053 protein HI_0107.